Here is a 419-residue protein sequence, read N- to C-terminus: MPSRKADLIVGIQWGDEGKGKIVDRLAKEYDMVCRSQGGHNAGHTIWVDGVRYALHLIPSGILNPKAVNVIGNGVVLSPESIIKEMLQFENLEGRLFISDKAHLNLSYHSLIDQAREKLKGDKAIGTTGKGIGPAYSDKINRVGMRVGELLNPEKLCERIVEHFEQNRDIFAILNINMPNKNELLEELKGYSEKLSPFITDTTQLIWRALDKENKRVLLEGAQGTMLDIDHGTYPYVTSSSTISAGACTGLGINAKDIGKVIGIVKAYCTRVGNGPFPSEDLGKDGKLLGERGHEFGTTTGRARRCGWFDAVACRYASRLNGCDELALMKLDVLDGFDEVKVCVAYELNGAQIDYLPANLDDVKPIYKSFKGWDKTEGARRFEDLPKEAQDYIKIIEEITKTKVGIISTSPEREDTIIL.

GTP is bound by residues 15-21 and 43-45; these read GDEGKGK and GHT. The active-site Proton acceptor is the aspartate 16. Residues aspartate 16 and glycine 43 each contribute to the Mg(2+) site. IMP contacts are provided by residues 16-19, 41-44, threonine 128, arginine 142, glutamine 223, threonine 238, and arginine 302; these read DEGK and NAGH. The active-site Proton donor is histidine 44. 298-304 provides a ligand contact to substrate; that stretch reads TTTGRAR. GTP-binding positions include arginine 304, 330–332, and 408–410; these read KLD and STS.

The protein belongs to the adenylosuccinate synthetase family. As to quaternary structure, homodimer. Requires Mg(2+) as cofactor.

The protein localises to the cytoplasm. The catalysed reaction is IMP + L-aspartate + GTP = N(6)-(1,2-dicarboxyethyl)-AMP + GDP + phosphate + 2 H(+). It functions in the pathway purine metabolism; AMP biosynthesis via de novo pathway; AMP from IMP: step 1/2. In terms of biological role, plays an important role in the de novo pathway of purine nucleotide biosynthesis. Catalyzes the first committed step in the biosynthesis of AMP from IMP. This is Adenylosuccinate synthetase from Sulfurimonas denitrificans (strain ATCC 33889 / DSM 1251) (Thiomicrospira denitrificans (strain ATCC 33889 / DSM 1251)).